A 573-amino-acid polypeptide reads, in one-letter code: Glutamate--tRNA ligase (573 aa).

The 'HIGH' region signature appears at 107–117 (PNPDGAFHLGN).

It belongs to the class-I aminoacyl-tRNA synthetase family. Glutamate--tRNA ligase type 2 subfamily.

It is found in the cytoplasm. The enzyme catalyses tRNA(Glu) + L-glutamate + ATP = L-glutamyl-tRNA(Glu) + AMP + diphosphate. In terms of biological role, catalyzes the attachment of glutamate to tRNA(Glu) in a two-step reaction: glutamate is first activated by ATP to form Glu-AMP and then transferred to the acceptor end of tRNA(Glu). This is Glutamate--tRNA ligase from Thermococcus kodakarensis (strain ATCC BAA-918 / JCM 12380 / KOD1) (Pyrococcus kodakaraensis (strain KOD1)).